A 370-amino-acid chain; its full sequence is Glutamate 5-kinase (370 aa).

Lys13 serves as a coordination point for ATP. Residues Ser52, Asp139, and Asn151 each contribute to the substrate site. Residues 171 to 172 (SD) and 211 to 217 (SGGMKSK) contribute to the ATP site. The PUA domain maps to 275–353 (KGELVLDRGA…AEIEAVLGYR (79 aa)).

It belongs to the glutamate 5-kinase family.

It localises to the cytoplasm. It carries out the reaction L-glutamate + ATP = L-glutamyl 5-phosphate + ADP. It participates in amino-acid biosynthesis; L-proline biosynthesis; L-glutamate 5-semialdehyde from L-glutamate: step 1/2. In terms of biological role, catalyzes the transfer of a phosphate group to glutamate to form L-glutamate 5-phosphate. The chain is Glutamate 5-kinase from Thermus thermophilus (strain ATCC BAA-163 / DSM 7039 / HB27).